The chain runs to 246 residues: Small ribosomal subunit protein uS2 (246 aa).

The protein belongs to the universal ribosomal protein uS2 family.

This is Small ribosomal subunit protein uS2 from Lachnoclostridium phytofermentans (strain ATCC 700394 / DSM 18823 / ISDg) (Clostridium phytofermentans).